Here is a 172-residue protein sequence, read N- to C-terminus: Centrin-2 (172 aa).

Residues 1 to 31 (MASNFKKANMASTTQRKRMSPKPELTEEQKQ) form a disordered region. N-acetylalanine is present on alanine 2. The segment at 2-25 (ASNFKKANMASTTQRKRMSPKPEL) is required for self-assembly. Position 20 is a phosphoserine (serine 20). A Glycyl lysine isopeptide (Lys-Gly) (interchain with G-Cter in SUMO2) cross-link involves residue lysine 22. Threonine 26 carries the post-translational modification Phosphothreonine. EF-hand domains follow at residues 28-63 (EQKQEIREAFDLFDADGTGTIDVKELKVAMRALGFE), 64-99 (PKKEEIKKMISEIDKEGTGKMNFSDFLTVMTQKMSE), 101-136 (DTKEEILKAFKLFDDDETGKISFKNLKRVAKELGEN), and 137-172 (LSDEELQEMIDEADRDGDGEVNEQEFLRIMKKTSLY). Positions 41, 43, 45, 47, and 52 each coordinate Ca(2+). Ca(2+)-binding residues include aspartate 150, aspartate 152, aspartate 154, glutamate 156, and glutamate 161.

The protein belongs to the centrin family. In terms of assembly, monomer. Homooligomer. Interacts with CCP110, SFI1. Component of the XPC complex composed of XPC, RAD23B and CETN2. Component of the nuclear pore complex (NPC)-associated TREX-2 complex (transcription and export complex 2), composed of at least GANP, 2 copies of ENY2, PCID2, SEM1/DSS1, and either centrin CETN2 or centrin CETN3. The TREX-2 complex also associates with ALYREF/ALY and with the nucleoporin NUP153. Interacts with USP49. Forms a microtubule-associated complex with POC5, POC1B and FAM161A. Interacts with CCDC15.

The protein localises to the cytoplasm. The protein resides in the cytoskeleton. It localises to the microtubule organizing center. Its subcellular location is the centrosome. It is found in the centriole. The protein localises to the nucleus. The protein resides in the nucleus envelope. It localises to the nuclear pore complex. Functionally, plays a fundamental role in microtubule organizing center structure and function. Required for centriole duplication and correct spindle formation. Has a role in regulating cytokinesis and genome stability via cooperation with CALM1 and CCP110. In terms of biological role, involved in global genome nucleotide excision repair (GG-NER) by acting as component of the XPC complex. Cooperatively with RAD23B appears to stabilize XPC. In vitro, stimulates DNA binding of the XPC:RAD23B dimer. Its function is as follows. The XPC complex is proposed to represent the first factor bound at the sites of DNA damage and together with other core recognition factors, XPA, RPA and the TFIIH complex, is part of the pre-incision (or initial recognition) complex. The XPC complex recognizes a wide spectrum of damaged DNA characterized by distortions of the DNA helix such as single-stranded loops, mismatched bubbles or single-stranded overhangs. The orientation of XPC complex binding appears to be crucial for inducing a productive NER. XPC complex is proposed to recognize and to interact with unpaired bases on the undamaged DNA strand which is followed by recruitment of the TFIIH complex and subsequent scanning for lesions in the opposite strand in a 5'-to-3' direction by the NER machinery. Cyclobutane pyrimidine dimers (CPDs) which are formed upon UV-induced DNA damage esacpe detection by the XPC complex due to a low degree of structural perurbation. Instead they are detected by the UV-DDB complex which in turn recruits and cooperates with the XPC complex in the respective DNA repair. As a component of the TREX-2 complex, involved in the export of mRNAs to the cytoplasm through the nuclear pores. The protein is Centrin-2 (CETN2) of Bos taurus (Bovine).